The sequence spans 185 residues: MEFQGERGTGPGVSSSSVACSQVTVSRELLTAGSEGSGGIWDQLLISSKPHPRKTSTLQTVRMQRSPLLDQVQAFLPQMAQANEKLRREMAAAPAGHFNIENIDETSGNIIQMDVALFEMSRSDSKEEDSPEESSRDSSGDSSESEEDVCVPSEVTIENIKLPNAEGGKGKIEILDSPASKKKKQ.

Residues Ser-34, Ser-66, and Ser-177 each carry the phosphoserine modification. Residues 121–185 are disordered; it reads SRSDSKEEDS…DSPASKKKKQ (65 aa).

Interacts with NOP58, RUVBL1 and RUVBL2; the interactions are direct and NOPCHAP1 bridges the association of NOP58 with RUVBL1:RUVBL2 even in absence of snoRNAs. The interactions with RUVBL1 and RUVBL2 are disrupted upon ATP binding.

The protein resides in the nucleus. Its function is as follows. Client-loading PAQosome/R2TP complex cofactor that selects NOP58 to promote box C/D small nucleolar ribonucleoprotein (snoRNP) assembly. Acts as a bridge between NOP58 and the R2TP complex via RUVBL1:RUVBL2. This is NOP protein chaperone 1 from Mus musculus (Mouse).